Reading from the N-terminus, the 312-residue chain is MAMKRKKISVIGAGFTGATTAFLLAQKELGDIVLVDIPQLENPTKGKALDMLESSPVLGFDANIVGTSDYADTADSDIVVITAGIARKPGMSRDDLVTTNQKIMKQVTKEVVKYSPNCYIIVLTNPVDAMSYTVFKESGFPKNRVIGQSGVLDTARFRTFVAQELNISVKDVTGFVLGGHGDDMVPLVRYSYAGGIPLEKLIPKDRLDAIVERTRKGGGEIVNLLGNGSAYYAPAASLAEMVEAIVKDQRRILPAITYLEGEYGYEGIYLGVPTILGGNGIEKVIELELTEDEKAALAKSLESVKNVMRVLE.

NAD(+) contacts are provided by residues 12-17 and Asp36; that span reads GAGFTG. 2 residues coordinate substrate: Arg87 and Arg93. NAD(+) contacts are provided by residues Asn100 and 123–125; that span reads LTN. Position 125 (Asn125) interacts with substrate. Ser149 is subject to Phosphoserine. Arg156 provides a ligand contact to substrate. His180 acts as the Proton acceptor in catalysis.

This sequence belongs to the LDH/MDH superfamily. MDH type 3 family.

It carries out the reaction (S)-malate + NAD(+) = oxaloacetate + NADH + H(+). Catalyzes the reversible oxidation of malate to oxaloacetate. The protein is Malate dehydrogenase of Geobacillus thermodenitrificans.